We begin with the raw amino-acid sequence, 208 residues long: MSKYIGPDCRLCRREGMKLFLKGDRCYTEKCAFAKRPYPPGQHGQERKKLSEYGMQLREKQKVKRIYGVLETQFRRYFEMAEKMKGIAGENLLSLLERRLDNVVYRLGFASSRGEARVLVSHAHFKVNGKTVNIPSYLVDVGDVIEVKEKSKSKPRFIEIKEKYAKRPSPKWLEKDAENLVGKVIALPTREDIDMPIKEHLIVELYSK.

One can recognise an S4 RNA-binding domain in the interval 98-163; it reads RRLDNVVYRL…KPRFIEIKEK (66 aa).

This sequence belongs to the universal ribosomal protein uS4 family. As to quaternary structure, part of the 30S ribosomal subunit. Contacts protein S5. The interaction surface between S4 and S5 is involved in control of translational fidelity.

In terms of biological role, one of the primary rRNA binding proteins, it binds directly to 16S rRNA where it nucleates assembly of the body of the 30S subunit. Functionally, with S5 and S12 plays an important role in translational accuracy. This chain is Small ribosomal subunit protein uS4, found in Caldicellulosiruptor saccharolyticus (strain ATCC 43494 / DSM 8903 / Tp8T 6331).